Here is a 146-residue protein sequence, read N- to C-terminus: Large ribosomal subunit protein uL15 (146 aa).

Residues 1-13 (MKLHELKPAEGSR) show a composition bias toward basic and acidic residues. Residues 1-60 (MKLHELKPAEGSRKQRNRVGRGIGSGNGKTAGKGHKGQNARSGGGVRPGFEGGQNPLFRR) form a disordered region. Gly residues-rich tracts occupy residues 21-31 (RGIGSGNGKTA) and 42-52 (SGGGVRPGFEG).

This sequence belongs to the universal ribosomal protein uL15 family. Part of the 50S ribosomal subunit.

In terms of biological role, binds to the 23S rRNA. This is Large ribosomal subunit protein uL15 from Lysinibacillus sphaericus (strain C3-41).